The chain runs to 239 residues: MPIKKPCLKLNLDSLNVVRSEIPQMLSANERLKNNFNILYNQIRQYPAYYFKVASNVPTYSDICQFFSVMYQGFQIVNHSGDVFIHACRENPQSKGDFVGDKFHISIAREQVPLAFQILSGLLFSEDSPIDKWKITDMNRVSQQSRVGIGAQFTLYVKSDQECSQYSALLLHKIRQFIMCLESNLLRSKIAPGEYPASDVRPEDWKYVSYRNELRSDRDGSERQEQMLREEPFYRLMIE.

The Proton donor role is filled by histidine 104. Lysine 134 (proton acceptor) is an active-site residue.

This sequence belongs to the phosphothreonine lyase family.

The protein resides in the secreted. In terms of biological role, catalyzes the removal of the phosphate group from the phosphothreonine in the mitogen-activated protein kinases p38, phosphothreonine in the mitogen-activated protein kinases such as MAPK2/ERK2, MAPK3/ERK1, MAPK8 and MAPK14 in an irreversible reaction, thus preventing the downstream phosphorylation of histone H3. This epigenetic modification results in inhibition of the transcription of a specific subset of pro-inflammatory genes, and ultimately to a reduced immune response against the invading pathogen. The diminished immune response enhances the bacterium's ability to disseminate and multiply within the host. This chain is Phosphothreonine lyase OspF (ospF), found in Shigella boydii serotype 4 (strain Sb227).